The chain runs to 162 residues: NADH-quinone oxidoreductase subunit I (162 aa).

2 4Fe-4S ferredoxin-type domains span residues 54 to 83 (RRYENGEERCIACKLCEVVCPALAITINST) and 93 to 122 (SSYEIDLFKCIFCGYCEESCPVDSIVETNI). 8 residues coordinate [4Fe-4S] cluster: C63, C66, C69, C73, C102, C105, C108, and C112.

This sequence belongs to the complex I 23 kDa subunit family. In terms of assembly, NDH-1 is composed of 14 different subunits. Subunits NuoA, H, J, K, L, M, N constitute the membrane sector of the complex. [4Fe-4S] cluster serves as cofactor.

The protein localises to the cell inner membrane. The enzyme catalyses a quinone + NADH + 5 H(+)(in) = a quinol + NAD(+) + 4 H(+)(out). In terms of biological role, NDH-1 shuttles electrons from NADH, via FMN and iron-sulfur (Fe-S) centers, to quinones in the respiratory chain. The immediate electron acceptor for the enzyme in this species is believed to be ubiquinone. Couples the redox reaction to proton translocation (for every two electrons transferred, four hydrogen ions are translocated across the cytoplasmic membrane), and thus conserves the redox energy in a proton gradient. The protein is NADH-quinone oxidoreductase subunit I of Francisella philomiragia subsp. philomiragia (strain ATCC 25017 / CCUG 19701 / FSC 153 / O#319-036).